The sequence spans 353 residues: Type 2 DNA topoisomerase 6 subunit A (353 aa).

Residues Asn2–Ala138 form the Topo IIA-type catalytic domain. Tyr96 functions as the O-(5'-phospho-DNA)-tyrosine intermediate in the catalytic mechanism. Mg(2+)-binding residues include Glu186 and Asp238.

Belongs to the TOP6A family. In terms of assembly, homodimer. Heterotetramer of two Top6A and two Top6B chains. The cofactor is Mg(2+).

It catalyses the reaction ATP-dependent breakage, passage and rejoining of double-stranded DNA.. Relaxes both positive and negative superturns and exhibits a strong decatenase activity. This chain is Type 2 DNA topoisomerase 6 subunit A, found in Methanothermobacter thermautotrophicus (strain ATCC 29096 / DSM 1053 / JCM 10044 / NBRC 100330 / Delta H) (Methanobacterium thermoautotrophicum).